A 400-amino-acid polypeptide reads, in one-letter code: Acetate kinase (400 aa).

Residue Asn-10 participates in Mg(2+) binding. ATP is bound at residue Lys-17. A substrate-binding site is contributed by Arg-91. The active-site Proton donor/acceptor is Asp-150. Residues 210–214 (HLGGG), 285–287 (DFR), and 333–337 (GIGEN) each bind ATP. Residue Glu-387 coordinates Mg(2+).

This sequence belongs to the acetokinase family. In terms of assembly, homodimer. Mg(2+) serves as cofactor. Mn(2+) is required as a cofactor.

The protein localises to the cytoplasm. The catalysed reaction is acetate + ATP = acetyl phosphate + ADP. It functions in the pathway metabolic intermediate biosynthesis; acetyl-CoA biosynthesis; acetyl-CoA from acetate: step 1/2. Catalyzes the formation of acetyl phosphate from acetate and ATP. Can also catalyze the reverse reaction. The chain is Acetate kinase from Buchnera aphidicola subsp. Baizongia pistaciae (strain Bp).